Consider the following 527-residue polypeptide: GMP synthase [glutamine-hydrolyzing] (527 aa).

Residues 4-202 (KILILDFGSQ…VLKICGAKPD (199 aa)) enclose the Glutamine amidotransferase type-1 domain. Cysteine 81 (nucleophile) is an active-site residue. Residues histidine 176 and glutamate 178 contribute to the active site. The GMPS ATP-PPase domain maps to 203 to 395 (WEMGNYIDEA…LGLPPSMVYR (193 aa)). 230–236 (SGGVDSS) contributes to the ATP binding site.

In terms of assembly, homodimer.

The catalysed reaction is XMP + L-glutamine + ATP + H2O = GMP + L-glutamate + AMP + diphosphate + 2 H(+). It participates in purine metabolism; GMP biosynthesis; GMP from XMP (L-Gln route): step 1/1. Its function is as follows. Catalyzes the synthesis of GMP from XMP. The polypeptide is GMP synthase [glutamine-hydrolyzing] (Paraburkholderia phymatum (strain DSM 17167 / CIP 108236 / LMG 21445 / STM815) (Burkholderia phymatum)).